Reading from the N-terminus, the 376-residue chain is Putative glutamate--cysteine ligase 2-1 (376 aa).

This sequence belongs to the glutamate--cysteine ligase type 2 family. YbdK subfamily.

It carries out the reaction L-cysteine + L-glutamate + ATP = gamma-L-glutamyl-L-cysteine + ADP + phosphate + H(+). Functionally, ATP-dependent carboxylate-amine ligase which exhibits weak glutamate--cysteine ligase activity. The polypeptide is Putative glutamate--cysteine ligase 2-1 (Mycolicibacterium smegmatis (strain ATCC 700084 / mc(2)155) (Mycobacterium smegmatis)).